The following is a 637-amino-acid chain: MPHMLYTEIPTQRPVTPLLDAIDHPQQLRQLEHSQLLQVADELRQYILYAAGQSGGHFGANLGVVELTVALHYCFNTPNDRLVWDVGHQAYPHKILTGRREQITTIRAKNGLAAFPAREESVFDTFGVGHSSTAISAGLGMSLARRYQKDPCEVVCIVGDGAMTAGMAFEAMNDAVAHDADLIVVLNDNDMSISCSTGGFAKHLAAIWEKGHLVNVNEHGEAYIQPHPKWTYNSRLHQSATDAADNLFKAIGFDYFGPFDGHDVTQLVQVFNALKKRKGPRLVHVYTKKGKGFAPAEADPITYHAIGKINAASGGKTPPKYSDVFGEWLCDEAAQDERLLAITPAMCEGSGMVKFAKQFPQRFFDVAIAEQHAVTLAAGMACEGLKPVVAIYSTFLQRGYDQLIHDVALQNLDVTFGIDRAGLVGEDGPTHAGAYDYAYMRTVPNMVIMAPKDENECRQMLHTAYAYNGPAAVRYPRGAGVGVEIQKEMTVLELGKAEIVAEIKANSDEQITVLAFGSRVMVALEAAEQFAQKHDVSVCIVNMRFVKPLDEQMIRDLAEHTHLFVTVEEHAIMGGAGSAVNEFMAQEQIVKPIINLGLPDSFLHQATHNQMLQDCGLDAKGILNSIERAWLKVNQVV.

Residues His88 and 129–131 each bind thiamine diphosphate; that span reads GHS. Asp160 provides a ligand contact to Mg(2+). Thiamine diphosphate is bound by residues 161 to 162, Asn189, Phe293, and Glu370; that span reads GA. Residue Asn189 coordinates Mg(2+).

The protein belongs to the transketolase family. DXPS subfamily. Homodimer. Mg(2+) serves as cofactor. Thiamine diphosphate is required as a cofactor.

The catalysed reaction is D-glyceraldehyde 3-phosphate + pyruvate + H(+) = 1-deoxy-D-xylulose 5-phosphate + CO2. Its pathway is metabolic intermediate biosynthesis; 1-deoxy-D-xylulose 5-phosphate biosynthesis; 1-deoxy-D-xylulose 5-phosphate from D-glyceraldehyde 3-phosphate and pyruvate: step 1/1. Its function is as follows. Catalyzes the acyloin condensation reaction between C atoms 2 and 3 of pyruvate and glyceraldehyde 3-phosphate to yield 1-deoxy-D-xylulose-5-phosphate (DXP). The chain is 1-deoxy-D-xylulose-5-phosphate synthase from Acinetobacter baumannii (strain AYE).